The chain runs to 266 residues: Small ribosomal subunit protein uS3m (266 aa).

Belongs to the universal ribosomal protein uS3 family.

Its subcellular location is the mitochondrion. In Mycosarcoma maydis (Corn smut fungus), this protein is Small ribosomal subunit protein uS3m (MRPS3).